The chain runs to 240 residues: Intestine-specific homeobox (240 aa).

A disordered region spans residues 36-82; the sequence is PTERRSLPRPQSICKEDSRQTTIPGSKLERPPQDQPQEEKKNKRRVR. Over residues 62-76 the composition is skewed to basic and acidic residues; that stretch reads KLERPPQDQPQEEKK. Residues 78–137 constitute a DNA-binding region (homeobox); it reads KRRVRTTFTTEQLQELEKLFHFTHYPDIHVRSQLASRINLPEARVQIWFQNQRAKWRKQE.

In terms of tissue distribution, expressed in intestinal epithelial cells from the duodenum to the proximal colon.

The protein localises to the nucleus. Transcription factor that regulates gene expression in intestine. May participate in vitamin A metabolism most likely by regulating BCO1 expression in the intestine. The chain is Intestine-specific homeobox (Isx) from Mus musculus (Mouse).